We begin with the raw amino-acid sequence, 119 residues long: Protein TusC (119 aa).

This sequence belongs to the DsrF/TusC family. In terms of assembly, heterohexamer, formed by a dimer of trimers. The hexameric TusBCD complex contains 2 copies each of TusB, TusC and TusD. The TusBCD complex interacts with TusE.

Its subcellular location is the cytoplasm. Part of a sulfur-relay system required for 2-thiolation of 5-methylaminomethyl-2-thiouridine (mnm(5)s(2)U) at tRNA wobble positions. The chain is Protein TusC from Citrobacter koseri (strain ATCC BAA-895 / CDC 4225-83 / SGSC4696).